Reading from the N-terminus, the 110-residue chain is Ribonuclease H2 subunit C (110 aa).

A disordered region spans residues 45 to 69 (LKREKSATPSSSDNTTSNTFSNGAI). The segment covering 51 to 66 (ATPSSSDNTTSNTFSN) has biased composition (low complexity).

This sequence belongs to the RNase H2 subunit C family. Highly divergent. The RNase 2 complex is a heterotrimer composed of the catalytic subunit RNH201 and of the non-catalytic subunits RNH202 and RNH203.

The protein resides in the cytoplasm. Its subcellular location is the nucleus. Its function is as follows. Non catalytic subunit of RNase H2, an endonuclease that specifically degrades the RNA of RNA:DNA hybrids. Participates in DNA replication, possibly by mediating the removal of lagging-strand Okazaki fragment RNA primers during DNA replication. Mediates the excision of single ribonucleotides from DNA:RNA duplexes. The chain is Ribonuclease H2 subunit C (RNH203) from Saccharomyces cerevisiae (strain ATCC 204508 / S288c) (Baker's yeast).